Here is a 325-residue protein sequence, read N- to C-terminus: uncharacterized protein (325 aa).

A disordered region spans residues 1-75; that stretch reads MSQPPEHPGN…PPPGYPTHLQ (75 aa). The segment covering 24–70 has biased composition (pro residues); it reads YPPPGYGAPPPPPGYGPPPGTYLPPGYNAPPPPPGYGPPPGPPPPGY. A run of 4 helical transmembrane segments spans residues 96-116, 153-173, 205-225, and 273-293; these read AVTL…VIGA, IVMF…HAGI, LLIV…GLIF, and LVGE…AALI.

It is found in the cell membrane. This is an uncharacterized protein from Mycobacterium tuberculosis (strain ATCC 25618 / H37Rv).